The primary structure comprises 185 residues: Ribosome-recycling factor (185 aa).

Belongs to the RRF family.

The protein localises to the cytoplasm. Functionally, responsible for the release of ribosomes from messenger RNA at the termination of protein biosynthesis. May increase the efficiency of translation by recycling ribosomes from one round of translation to another. The protein is Ribosome-recycling factor of Streptococcus pneumoniae (strain 70585).